We begin with the raw amino-acid sequence, 76 residues long: Putative snRNP Sm-like protein (76 aa).

The Sm domain maps to arginine 4–glutamate 76.

Belongs to the snRNP Sm proteins family.

In Thermococcus kodakarensis (strain ATCC BAA-918 / JCM 12380 / KOD1) (Pyrococcus kodakaraensis (strain KOD1)), this protein is Putative snRNP Sm-like protein.